A 48-amino-acid polypeptide reads, in one-letter code: uncharacterized protein (48 aa).

The protein belongs to the ELIP/psbS family.

It localises to the plastid. Its subcellular location is the chloroplast. Its function is as follows. Possible role in chlorophyll and/or carotenoid binding. This is an uncharacterized protein from Porphyra purpurea (Red seaweed).